The primary structure comprises 244 residues: Adenosylcobinamide-GDP ribazoletransferase (244 aa).

Helical transmembrane passes span 31–51, 55–75, 109–129, 133–153, and 188–208; these read LLCY…ASHL, APAP…SGAL, IAVV…WVLV, AGAL…GLFL, and LLLG…VFLW.

The protein belongs to the CobS family. Mg(2+) serves as cofactor.

It localises to the cell inner membrane. The catalysed reaction is alpha-ribazole + adenosylcob(III)inamide-GDP = adenosylcob(III)alamin + GMP + H(+). It carries out the reaction alpha-ribazole 5'-phosphate + adenosylcob(III)inamide-GDP = adenosylcob(III)alamin 5'-phosphate + GMP + H(+). Its pathway is cofactor biosynthesis; adenosylcobalamin biosynthesis; adenosylcobalamin from cob(II)yrinate a,c-diamide: step 7/7. Its function is as follows. Joins adenosylcobinamide-GDP and alpha-ribazole to generate adenosylcobalamin (Ado-cobalamin). Also synthesizes adenosylcobalamin 5'-phosphate from adenosylcobinamide-GDP and alpha-ribazole 5'-phosphate. The chain is Adenosylcobinamide-GDP ribazoletransferase from Pseudomonas putida (strain W619).